Consider the following 505-residue polypeptide: Peroxisome proliferator-activated receptor gamma (505 aa).

Residues 1 to 26 are disordered; that stretch reads MGETLGDSLIDPESDSFADTLSASTS. The segment covering 17-26 has biased composition (polar residues); sequence FADTLSASTS. Position 112 is a phosphoserine; by MAPK (serine 112). The nuclear receptor DNA-binding region spans 136–210; the sequence is AIECRVCGDK…VGMSHNAIRF (75 aa). 2 consecutive NR C4-type zinc fingers follow at residues 139–159 and 176–198; these read CRVC…CEGC and CDLN…FQKC. Positions 205–280 are interaction with FAM120B; it reads HNAIRFGRMP…DKSPFVIYDM (76 aa). Positions 238-503 constitute an NR LBD domain; sequence DLRALAKHLY…HPLLQEIYKD (266 aa). A Glycyl lysine isopeptide (Lys-Gly) (interchain with G-Cter in ubiquitin) cross-link involves residue lysine 252. Positions 495–503 match the 9aaTAD motif; the sequence is PLLQEIYKD.

Belongs to the nuclear hormone receptor family. NR1 subfamily. Interacts with FOXO1 (acetylated form). Heterodimer with other nuclear receptors, such as RXRA. The heterodimer with the retinoic acid receptor RXRA is called adipocyte-specific transcription factor ARF6. Interacts with NCOA6 coactivator, leading to a strong increase in transcription of target genes. Interacts with coactivator PPARBP, leading to a mild increase in transcription of target genes. Interacts with NOCA7 in a ligand-inducible manner. Interacts with NCOA1 and NCOA2 LXXLL motifs. Interacts with ASXL1, ASXL2, DNTTIP2, FAM120B, MAP2K1/MEK1, NR0B2, PDPK1, PRDM16, PRMT2 and TGFB1I1. Interacts (when activated by agonist) with PPP5C. Interacts with HELZ2 and THRAP3; the interaction stimulates the transcriptional activity of PPARG. Interacts with PER2, the interaction is ligand dependent and blocks PPARG recruitment to target promoters. Interacts with NOCT. Interacts with ACTN4. Interacts (when in the liganded conformation) with GPS2. Interacts with CRY1 and CRY2 in a ligand-dependent manner. In the absence of hormonal ligand, interacts with TACC1. In macrophages, interacts with PAQR3 and STUB1; the interactions promote PPARG poylubiquitination and STUB1-mediated degradation. Phosphorylated at basal conditions and dephosphorylated when treated with the ligand. May be dephosphorylated by PPP5C. The phosphorylated form may be inactive and dephosphorylation induces adipogenic activity. Post-translationally, ubiquitinated by E3 ubiquitin-protein ligase complex containing FBXO9; leading to proteasomal degradation. Ubiquitinated at Lys-252 by TRIM55 leading to proteasomal degradation. Ubiquitinated by E3 ubiquitin-protein ligase STUB1/CHIP; leading to proteasomal degradation.

Its subcellular location is the nucleus. The protein localises to the cytoplasm. With respect to regulation, PDPK1 activates its transcriptional activity independently of its kinase activity. Functionally, nuclear receptor that binds peroxisome proliferators such as hypolipidemic drugs and fatty acids. Once activated by a ligand, the nuclear receptor binds to DNA specific PPAR response elements (PPRE) and modulates the transcription of its target genes, such as acyl-CoA oxidase. It therefore controls the peroxisomal beta-oxidation pathway of fatty acids. Key regulator of adipocyte differentiation and glucose homeostasis. ARF6 acts as a key regulator of the tissue-specific adipocyte P2 (aP2) enhancer. Acts as a critical regulator of gut homeostasis by suppressing NF-kappa-B-mediated pro-inflammatory responses. Plays a role in the regulation of cardiovascular circadian rhythms by regulating the transcription of BMAL1 in the blood vessels. The sequence is that of Peroxisome proliferator-activated receptor gamma (PPARG) from Canis lupus familiaris (Dog).